The following is a 567-amino-acid chain: Laccase-7 (567 aa).

The signal sequence occupies residues Met-1 to Ala-23. Plastocyanin-like domains lie at Asn-31–Gly-147 and Lys-157–Ala-310. Residues Asn-34, Asn-50, and Asn-77 are each glycosylated (N-linked (GlcNAc...) asparagine). His-81 and His-83 together coordinate Cu cation. N-linked (GlcNAc...) asparagine glycosylation occurs at Asn-115. 2 residues coordinate Cu cation: His-126 and His-128. N-linked (GlcNAc...) asparagine glycosylation is found at Asn-186, Asn-298, Asn-339, Asn-374, Asn-386, Asn-427, and Asn-450. Positions Asp-412 to Pro-551 constitute a Plastocyanin-like 3 domain. His-468, His-471, His-473, His-530, Cys-531, His-532, and His-536 together coordinate Cu cation.

It belongs to the multicopper oxidase family. Requires Cu cation as cofactor. As to expression, predominantly expressed in tissues other than the inflorescence stem.

The protein localises to the secreted. Its subcellular location is the extracellular space. It localises to the apoplast. The catalysed reaction is 4 hydroquinone + O2 = 4 benzosemiquinone + 2 H2O. Functionally, lignin degradation and detoxification of lignin-derived products. The protein is Laccase-7 (LAC7) of Arabidopsis thaliana (Mouse-ear cress).